The sequence spans 444 residues: ATP-dependent RNA helicase sub2 (444 aa).

The short motif at 59-87 is the Q motif element; that stretch reads TGFREFLLKPELLRAISWCGFEHPSEVQQ. The region spanning 90–265 is the Helicase ATP-binding domain; it reads IPQAILGTDV…KKFMQNPLEI (176 aa). 103 to 110 contacts ATP; that stretch reads AKSGLGKT. Positions 212 to 215 match the DECD box motif; the sequence is DECD. One can recognise a Helicase C-terminal domain in the interval 277–438; it reads GLQQYYIKLE…EYPEGGVDSA (162 aa).

Belongs to the DEAD box helicase family. DECD subfamily.

The protein localises to the nucleus. The enzyme catalyses ATP + H2O = ADP + phosphate + H(+). In terms of biological role, ATP-binding RNA helicase involved in transcription elongation and required for the export of mRNA out of the nucleus. SUB2 also plays a role in pre-mRNA splicing and spliceosome assembly. May be involved in rDNA and telomeric silencing, and maintenance of genome integrity. This Sclerotinia sclerotiorum (strain ATCC 18683 / 1980 / Ss-1) (White mold) protein is ATP-dependent RNA helicase sub2 (sub2).